A 344-amino-acid chain; its full sequence is Arginine N-succinyltransferase (344 aa).

L125 serves as a coordination point for succinyl-CoA. H229 (proton donor) is an active-site residue.

Belongs to the arginine N-succinyltransferase family.

The enzyme catalyses succinyl-CoA + L-arginine = N(2)-succinyl-L-arginine + CoA + H(+). It participates in amino-acid degradation; L-arginine degradation via AST pathway; L-glutamate and succinate from L-arginine: step 1/5. Its function is as follows. Catalyzes the transfer of succinyl-CoA to arginine to produce N(2)-succinylarginine. The sequence is that of Arginine N-succinyltransferase from Salmonella dublin (strain CT_02021853).